The primary structure comprises 1035 residues: Sulfite reductase [NADPH] flavoprotein component (1035 aa).

Residues 648-879 (VKNFVVKVKE…VKPSVMKLPP (232 aa)) enclose the FAD-binding FR-type domain. FAD is bound by residues 684 to 695 (YDIGEALGIHAR) and 814 to 824 (LKRREYSIASS).

Requires FAD as cofactor. FMN is required as a cofactor.

It catalyses the reaction hydrogen sulfide + 3 NADP(+) + 3 H2O = sulfite + 3 NADPH + 4 H(+). The protein operates within sulfur metabolism; hydrogen sulfide biosynthesis; hydrogen sulfide from sulfite (NADPH route): step 1/1. In terms of biological role, this enzyme catalyzes the 6-electron reduction of sulfite to sulfide. This is one of several activities required for the biosynthesis of L-cysteine from sulfate. This Saccharomyces cerevisiae (strain ATCC 204508 / S288c) (Baker's yeast) protein is Sulfite reductase [NADPH] flavoprotein component (MET10).